A 576-amino-acid chain; its full sequence is MDSRRRPSKPLLTSSGEVLHRKQASPVTDEDQIHRSPKASDALPLPLYLTNAVFFTLFFSVAYYLLHRWRDKIRNSTPLHVVTLSEIAAIVSLIASFIYLLGFFGIDFVQSFIARASHEAWDLDDATPDFLVDDSGCPPPCPIVRTPNLDRQVLATLSSEEDEEIINSVVQGKVPSYSLESKIGDCKRAAAIRREALQRTTRRSLQGLPLEGFDYESILGQCCEMPVGYVQIPVGIAGPLMLDGFEYSVPMATTEGCLIASTNRGCKAIHLSGGASSVLLRDGMTRAPVVRFSSAKRASELKFFLEDPENFDTLSMVFNRSSRFARLQGIQCAIAGKNVYVRFTCSTGDAMGMNMVSKGVQNVLDFLQTDFHDMDVIGISGNFCSDKKPAAVNWIEGRGKSVVCEAVINEEVVKKVLKTNIDALVELNMLKNLAGSAIAGALGGFNAHASNIVSAIFIATGQDPAQNIESSHCITMMEAINNGKDLHVSVTMPSIEVGTVGGGTQLASQSACLNLLGVKGSNKDSPGANSRLLATIVAGSVLAGELSLMSAIAAGQLVKSHMKYNRSSKDMSKVAC.

The interval 1–35 (MDSRRRPSKPLLTSSGEVLHRKQASPVTDEDQIHR) is disordered. A run of 2 helical transmembrane segments spans residues 42-62 (ALPL…FSVA) and 89-109 (AIVS…IDFV). Catalysis depends on Glu-255, which acts as the Charge relay system. Asn-319 carries N-linked (GlcNAc...) asparagine glycosylation. Residues Lys-387 and Asp-463 each act as charge relay system in the active site. The chain crosses the membrane as a helical span at residues 532 to 552 (LLATIVAGSVLAGELSLMSAI). The Proton donor role is filled by His-561. N-linked (GlcNAc...) asparagine glycosylation occurs at Asn-565.

Belongs to the HMG-CoA reductase family. In terms of tissue distribution, expressed in trichomes, leaves, flowers, roots and stems.

It localises to the endoplasmic reticulum membrane. It is found in the plastid. The protein localises to the chloroplast membrane. Its subcellular location is the peroxisome membrane. It carries out the reaction (R)-mevalonate + 2 NADP(+) + CoA = (3S)-3-hydroxy-3-methylglutaryl-CoA + 2 NADPH + 2 H(+). Its pathway is metabolic intermediate biosynthesis; (R)-mevalonate biosynthesis; (R)-mevalonate from acetyl-CoA: step 3/3. Functionally, catalyzes the synthesis of mevalonate, the specific precursor of all isoprenoid compounds present in plants. Component of the triterpene saponins (e.g. ginsenosides or panaxosides) and phytosterols biosynthetic pathways. Promotes triterpenes accumulation in roots. This chain is 3-hydroxy-3-methylglutaryl coenzyme A reductase 1, found in Cannabis sativa (Hemp).